The following is a 214-amino-acid chain: Adenylate kinase (214 aa).

ATP is bound at residue 10-15; the sequence is GAGKGT. The tract at residues 30–59 is NMP; it reads STGDMLRAAIKAGTELGLNAKAVMDAGQLV. AMP-binding positions include T31, R36, 57–59, 85–88, and Q92; these read QLV and GFPR. An LID region spans residues 122–159; it reads GRRVHSGSGRTYHVVFNPPKVEGKDDVTGEDLVIRADD. ATP contacts are provided by residues R123 and 132 to 133; that span reads TY. Residues R156 and R167 each contribute to the AMP site. Q200 provides a ligand contact to ATP.

The protein belongs to the adenylate kinase family. Monomer.

Its subcellular location is the cytoplasm. It catalyses the reaction AMP + ATP = 2 ADP. It participates in purine metabolism; AMP biosynthesis via salvage pathway; AMP from ADP: step 1/1. In terms of biological role, catalyzes the reversible transfer of the terminal phosphate group between ATP and AMP. Plays an important role in cellular energy homeostasis and in adenine nucleotide metabolism. The sequence is that of Adenylate kinase from Aeromonas salmonicida (strain A449).